Reading from the N-terminus, the 306-residue chain is Ribosomal RNA small subunit methyltransferase H (306 aa).

Residues 37 to 39 (GGH), aspartate 56, aspartate 102, and glutamine 109 contribute to the S-adenosyl-L-methionine site.

It belongs to the methyltransferase superfamily. RsmH family.

The protein resides in the cytoplasm. It carries out the reaction cytidine(1402) in 16S rRNA + S-adenosyl-L-methionine = N(4)-methylcytidine(1402) in 16S rRNA + S-adenosyl-L-homocysteine + H(+). Functionally, specifically methylates the N4 position of cytidine in position 1402 (C1402) of 16S rRNA. The sequence is that of Ribosomal RNA small subunit methyltransferase H from Nautilia profundicola (strain ATCC BAA-1463 / DSM 18972 / AmH).